Here is a 602-residue protein sequence, read N- to C-terminus: Aspartate--tRNA(Asp/Asn) ligase (602 aa).

Position 187 (E187) interacts with L-aspartate. An aspartate region spans residues 211-214 (QQFK). L-aspartate is bound by residues R233 and H461. 233 to 235 (RDE) is a binding site for ATP. E495 is an ATP binding site. Residue R502 participates in L-aspartate binding. An ATP-binding site is contributed by 547-550 (GLDR).

The protein belongs to the class-II aminoacyl-tRNA synthetase family. Type 1 subfamily. As to quaternary structure, homodimer.

Its subcellular location is the cytoplasm. The catalysed reaction is tRNA(Asx) + L-aspartate + ATP = L-aspartyl-tRNA(Asx) + AMP + diphosphate. Aspartyl-tRNA synthetase with relaxed tRNA specificity since it is able to aspartylate not only its cognate tRNA(Asp) but also tRNA(Asn). Reaction proceeds in two steps: L-aspartate is first activated by ATP to form Asp-AMP and then transferred to the acceptor end of tRNA(Asp/Asn). This is Aspartate--tRNA(Asp/Asn) ligase from Chlorobium phaeovibrioides (strain DSM 265 / 1930) (Prosthecochloris vibrioformis (strain DSM 265)).